A 361-amino-acid polypeptide reads, in one-letter code: Phosphoserine aminotransferase (361 aa).

Arginine 42 is an L-glutamate binding site. Residues 76-77 (AR), tryptophan 102, threonine 153, aspartate 173, and glutamine 196 contribute to the pyridoxal 5'-phosphate site. The residue at position 197 (lysine 197) is an N6-(pyridoxal phosphate)lysine. 238 to 239 (NT) is a pyridoxal 5'-phosphate binding site.

The protein belongs to the class-V pyridoxal-phosphate-dependent aminotransferase family. SerC subfamily. Homodimer. Pyridoxal 5'-phosphate is required as a cofactor.

It localises to the cytoplasm. It carries out the reaction O-phospho-L-serine + 2-oxoglutarate = 3-phosphooxypyruvate + L-glutamate. The catalysed reaction is 4-(phosphooxy)-L-threonine + 2-oxoglutarate = (R)-3-hydroxy-2-oxo-4-phosphooxybutanoate + L-glutamate. It participates in amino-acid biosynthesis; L-serine biosynthesis; L-serine from 3-phospho-D-glycerate: step 2/3. It functions in the pathway cofactor biosynthesis; pyridoxine 5'-phosphate biosynthesis; pyridoxine 5'-phosphate from D-erythrose 4-phosphate: step 3/5. In terms of biological role, catalyzes the reversible conversion of 3-phosphohydroxypyruvate to phosphoserine and of 3-hydroxy-2-oxo-4-phosphonooxybutanoate to phosphohydroxythreonine. In Yersinia enterocolitica serotype O:8 / biotype 1B (strain NCTC 13174 / 8081), this protein is Phosphoserine aminotransferase.